The sequence spans 432 residues: Alcohol acyltransferase 9 (432 aa).

Residues H156 and D379 each act as proton acceptor in the active site.

It belongs to the plant acyltransferase family.

The catalysed reaction is 2-(methylsulfanyl)acetyl-CoA + butan-1-ol = butyl 2-(methylsulfanyl)acetate + CoA. It carries out the reaction ethanol + acetyl-CoA = ethyl acetate + CoA. It catalyses the reaction butan-1-ol + acetyl-CoA = butyl acetate + CoA. The enzyme catalyses butan-1-ol + propanoyl-CoA = butyl propanoate + CoA. Its function is as follows. Involved in the biosynthesis of volatile esters which confer kiwifruit flavor. Alcohol acyl transferase that can use a wide range of alcohols as substrate to produce esters. Exhibits acetyl-CoA:alcohol O-acyltransferase activity. In Actinidia chinensis var. chinensis (Chinese soft-hair kiwi), this protein is Alcohol acyltransferase 9.